The sequence spans 245 residues: Heat shock transcription factor (245 aa).

A DNA-binding region spans residues 17 to 115; the sequence is KSGFVNRLYR…LISLITRDKS (99 aa). An involved in trimerization region spans residues 130-169; that stretch reads SLQYLASCNYKQQKEINDLKDRIKTLETKYATLYEIISNA.

It belongs to the HSF family. As to quaternary structure, homotrimer. Homotrimerization increases the affinity of HSF1 to DNA.

It is found in the nucleus. In terms of biological role, DNA-binding transcription factor that specifically binds heat shock promoter elements (HSE) and activates transcription. This is Heat shock transcription factor from Enterocytozoon bieneusi (strain H348) (Microsporidian parasite).